An 810-amino-acid polypeptide reads, in one-letter code: Abnormal pharyngeal pumping eat-20 (810 aa).

The N-terminal stretch at Met1–Ala20 is a signal peptide. The Extracellular portion of the chain corresponds to Gln21–Trp748. N-linked (GlcNAc...) asparagine glycosylation is found at Asn90, Asn171, and Asn232. 3 consecutive EGF-like domains span residues Pro220–Glu257, Leu258–Glu293, and Val301–Asn335. 9 disulfides stabilise this stretch: Cys224/Cys235, Cys229/Cys245, Cys247/Cys256, Cys261/Cys272, Cys266/Cys281, Cys283/Cys292, Cys305/Cys314, Cys309/Cys323, and Cys325/Cys334. N-linked (GlcNAc...) asparagine glycosylation occurs at Asn371. Low complexity predominate over residues Phe522–Pro531. Disordered stretches follow at residues Phe522–Gln567 and Pro684–Ser738. Over residues Asp542–Glu558 the composition is skewed to acidic residues. Residues Ile749–Ile769 traverse the membrane as a helical segment. The Cytoplasmic segment spans residues Leu770–Ile810.

In terms of tissue distribution, highly expressed in the pharynx, circumpharyngeal cells, pharyngeal-intestinal valve and a subset of neurons in larval and embryonic stages. Also moderately expressed in the lining of the intestine, coelomocytes, labial process bundles and some hypodermal cells. In adults, it is predominantly expressed in the pharynx, the pharyngeal-intenstinal valve, some circumpharyngeal cells, m3, m4 and m6 pharyngeal muscles, and IL1, OLQ, BAG and ALN neurons. Weaker expression is observed in labial process bundles, coelomocytes, the ventral hypodermal ridge, the vulval hypodermis and the sensory rays of the adult male tail.

The protein localises to the membrane. Its function is as follows. Regulates pharyngeal pumping during feeding. The polypeptide is Abnormal pharyngeal pumping eat-20 (eat-20) (Caenorhabditis elegans).